The primary structure comprises 448 residues: Probable glycine dehydrogenase (decarboxylating) subunit 1 (448 aa).

The protein belongs to the GcvP family. N-terminal subunit subfamily. As to quaternary structure, the glycine cleavage system is composed of four proteins: P, T, L and H. In this organism, the P 'protein' is a heterodimer of two subunits.

The enzyme catalyses N(6)-[(R)-lipoyl]-L-lysyl-[glycine-cleavage complex H protein] + glycine + H(+) = N(6)-[(R)-S(8)-aminomethyldihydrolipoyl]-L-lysyl-[glycine-cleavage complex H protein] + CO2. The glycine cleavage system catalyzes the degradation of glycine. The P protein binds the alpha-amino group of glycine through its pyridoxal phosphate cofactor; CO(2) is released and the remaining methylamine moiety is then transferred to the lipoamide cofactor of the H protein. This is Probable glycine dehydrogenase (decarboxylating) subunit 1 from Listeria monocytogenes serovar 1/2a (strain ATCC BAA-679 / EGD-e).